The chain runs to 722 residues: Polyribonucleotide nucleotidyltransferase (722 aa).

Residues aspartate 495 and aspartate 501 each coordinate Mg(2+). One can recognise a KH domain in the interval proline 562–isoleucine 621. Residues glycine 631–arginine 699 enclose the S1 motif domain.

This sequence belongs to the polyribonucleotide nucleotidyltransferase family. The cofactor is Mg(2+).

Its subcellular location is the cytoplasm. It carries out the reaction RNA(n+1) + phosphate = RNA(n) + a ribonucleoside 5'-diphosphate. Its function is as follows. Involved in mRNA degradation. Catalyzes the phosphorolysis of single-stranded polyribonucleotides processively in the 3'- to 5'-direction. The sequence is that of Polyribonucleotide nucleotidyltransferase from Prochlorococcus marinus (strain SARG / CCMP1375 / SS120).